Reading from the N-terminus, the 126-residue chain is Large ribosomal subunit protein bL20 (126 aa).

It belongs to the bacterial ribosomal protein bL20 family.

Binds directly to 23S ribosomal RNA and is necessary for the in vitro assembly process of the 50S ribosomal subunit. It is not involved in the protein synthesizing functions of that subunit. The chain is Large ribosomal subunit protein bL20 from Parafrankia sp. (strain EAN1pec).